The primary structure comprises 1274 residues: Paired amphipathic helix protein Sin3a (1274 aa).

Disordered stretches follow at residues methionine 1–alanine 26 and histidine 85–alanine 110. Residue serine 10 is modified to Phosphoserine. In terms of domain architecture, PAH 1 spans glutamine 119–glycine 189. The interval glutamine 119–threonine 196 is interaction with HCFC1. Residues lysine 122 and lysine 134 each participate in a glycyl lysine isopeptide (Lys-Gly) (interchain with G-Cter in SUMO2) cross-link. Residues proline 205–glutamine 297 form a disordered region. Residues proline 205 to glutamate 479 form an interaction with REST region. The span at serine 228–threonine 237 shows a compositional bias: low complexity. Positions lysine 252–threonine 266 are enriched in polar residues. Residues proline 267–proline 282 show a composition bias toward pro residues. Serine 277 is modified (phosphoserine). Residue threonine 284 is modified to Phosphothreonine. The span at threonine 284–glutamine 297 shows a compositional bias: polar residues. Residues glutamine 300 to alanine 383 form the PAH 2 domain. Positions aspartate 398 to proline 443 are disordered. Polar residues predominate over residues glutamine 412–cysteine 425. One can recognise a PAH 3 domain in the interval serine 457–lysine 526. Positions histidine 459 to lysine 526 are interaction with SAP30. Lysine 470 carries the post-translational modification N6-acetyllysine. The tract at residues glycine 524–alanine 851 is interaction with NCOR1. The interval tyrosine 525–glycine 660 is interactions with SUDS3 and SAP130. Residue lysine 564 forms a Glycyl lysine isopeptide (Lys-Gly) (interchain with G-Cter in SUMO2) linkage. An interactions with HDAC1 and ARID4B region spans residues asparagine 688 to glycine 830. Residue serine 833 is modified to Phosphoserine. Residues valine 835–glutamate 847 are compositionally biased toward acidic residues. The tract at residues valine 835 to serine 865 is disordered. Serine 861 is subject to Phosphoserine. Residues lysine 866 and lysine 876 each carry the N6-acetyllysine modification. The segment at valine 889 to arginine 968 is interaction with OGT. The stretch at cysteine 904 to glycine 933 forms a coiled coil. Phosphoserine is present on residues serine 941, serine 1090, and serine 1113. The interval cysteine 1137–methionine 1157 is disordered. Positions arginine 1139–methionine 1157 are enriched in basic and acidic residues.

As to quaternary structure, interacts with ARID4B, BRMS1L, HCFC1, HDAC1, HDAC2, MXI1, SAP30L, SAP130, SFPQ and TOPORS. Interacts with OGT (via TPRs 1-6); the interaction mediates transcriptional repression in parallel with histone deacetylase. Interacts with BAZ2A, MXD1, MXD3, MXD4, MBD2, DACH1, NCOR1, NR4A2, REST, RLIM, SAP30, SETDB1, SMYD2, and SUDS3. Interacts with PHF12 in a complex composed of HDAC1, PHF12 and SAP30. Interacts with TET1; the interaction recruits SIN3A to gene promoters. The large PER complex involved in the histone deacetylation is composed of at least HDAC1, PER2, SFPQ and SIN3A. Interacts with KLF11. Interacts with PPHLN1. Found in a complex with YY1, GON4L and HDAC1. Interacts (via PAH2) with FOXK1. Interacts with FOXK2. Found in a complex composed of at least SINHCAF, SIN3A, HDAC1, SAP30, RBBP4, OGT and TET1. Interacts with SINHCAF. Interacts with SPHK2. In terms of processing, SUMO1 sumoylated by TOPORS. Probably desumoylated by SENP2. In terms of tissue distribution, widely expressed. Highest levels in testis, lung and thymus. Expressed at relatively high levels throughout brain development. In adult mice, expression is high in neurogenic regions such as the subventricular zone, rostral migratory stream, olfactory bulb and dentate gyrus.

The protein localises to the nucleus. Its subcellular location is the nucleolus. Functionally, acts as a transcriptional repressor. Corepressor for REST. Interacts with MXI1 to repress MYC responsive genes and antagonize MYC oncogenic activities. Also interacts with MXD1-MAX heterodimers to repress transcription by tethering SIN3A to DNA. Acts cooperatively with OGT to repress transcription in parallel with histone deacetylation. Involved in the control of the circadian rhythms. Required for the transcriptional repression of circadian target genes, such as PER1, mediated by the large PER complex through histone deacetylation. Cooperates with FOXK1 to regulate cell cycle progression probably by repressing cell cycle inhibitor genes expression. Required for cortical neuron differentiation and callosal axon elongation. This is Paired amphipathic helix protein Sin3a (Sin3a) from Mus musculus (Mouse).